The primary structure comprises 94 residues: Small ribosomal subunit protein uS17 (94 aa).

Residues 1-22 form a disordered region; it reads MASSSTEGQAAARGRKKSWTGK.

This sequence belongs to the universal ribosomal protein uS17 family. As to quaternary structure, part of the 30S ribosomal subunit.

Its function is as follows. One of the primary rRNA binding proteins, it binds specifically to the 5'-end of 16S ribosomal RNA. In Chlorobium luteolum (strain DSM 273 / BCRC 81028 / 2530) (Pelodictyon luteolum), this protein is Small ribosomal subunit protein uS17.